A 566-amino-acid chain; its full sequence is Unconventional myosin-VIIa (566 aa).

The region spanning 67-566 (MMEDMIQHLG…AGVVYYESQG (500 aa)) is the Myosin motor domain. 160-167 (GESGAGKT) contributes to the ATP binding site.

It belongs to the TRAFAC class myosin-kinesin ATPase superfamily. Myosin family. Might homodimerize in a two headed molecule through the formation of a coiled-coil rod. Identified in a complex with USH1C and USH1G. Interacts with MYRIP. Interacts with RPE65. Interacts with CIB2. May interact with CALM. Interacts with WHRN. Interacts with PLEKHB1 (via PH domain). Interacts with PCDH15. Interacts with TWF2. Interacts with USH1G. Interacts with MYH9. Interacts (via MyTH4-FERM domains) with cytoplasmic regions of ADGRV1 and USH2A. Interacts with PDZD7 (via MyTH4-FERM domains). Interacts with CALML4.

Its subcellular location is the cytoplasm. It localises to the cell cortex. The protein localises to the cytoskeleton. It is found in the synapse. In terms of biological role, myosins are actin-based motor molecules with ATPase activity. Unconventional myosins serve in intracellular movements. Their highly divergent tails bind to membranous compartments, which are then moved relative to actin filaments. In the retina, plays an important role in the renewal of the outer photoreceptor disks. Plays an important role in the distribution and migration of retinal pigment epithelial (RPE) melanosomes and phagosomes, and in the regulation of opsin transport in retinal photoreceptors. In the inner ear, plays an important role in differentiation, morphogenesis and organization of cochlear hair cell bundles. Motor protein that is a part of the functional network formed by USH1C, USH1G, CDH23 and MYO7A that mediates mechanotransduction in cochlear hair cells. Required for normal hearing. Involved in hair-cell vesicle trafficking of aminoglycosides, which are known to induce ototoxicity. The chain is Unconventional myosin-VIIa (MYO7A) from Sus scrofa (Pig).